Reading from the N-terminus, the 64-residue chain is UPF0434 protein Oant_3286 (64 aa).

The protein belongs to the UPF0434 family.

In Brucella anthropi (strain ATCC 49188 / DSM 6882 / CCUG 24695 / JCM 21032 / LMG 3331 / NBRC 15819 / NCTC 12168 / Alc 37) (Ochrobactrum anthropi), this protein is UPF0434 protein Oant_3286.